We begin with the raw amino-acid sequence, 593 residues long: Aspartate--tRNA(Asp/Asn) ligase (593 aa).

Glutamate 175 contributes to the L-aspartate binding site. Positions 199-202 (QQYK) are aspartate. Positions 221 and 452 each coordinate L-aspartate. 221–223 (RDE) provides a ligand contact to ATP. Position 486 (glutamate 486) interacts with ATP. Arginine 493 contacts L-aspartate. 538-541 (GVDR) serves as a coordination point for ATP.

It belongs to the class-II aminoacyl-tRNA synthetase family. Type 1 subfamily. As to quaternary structure, homodimer.

Its subcellular location is the cytoplasm. The enzyme catalyses tRNA(Asx) + L-aspartate + ATP = L-aspartyl-tRNA(Asx) + AMP + diphosphate. In terms of biological role, aspartyl-tRNA synthetase with relaxed tRNA specificity since it is able to aspartylate not only its cognate tRNA(Asp) but also tRNA(Asn). Reaction proceeds in two steps: L-aspartate is first activated by ATP to form Asp-AMP and then transferred to the acceptor end of tRNA(Asp/Asn). In Novosphingobium aromaticivorans (strain ATCC 700278 / DSM 12444 / CCUG 56034 / CIP 105152 / NBRC 16084 / F199), this protein is Aspartate--tRNA(Asp/Asn) ligase.